The chain runs to 1704 residues: Arf-GAP with Rho-GAP domain, ANK repeat and PH domain-containing protein 2 (1704 aa).

The SAM domain maps to 6 to 70 (EVNVDIKDFL…LKQLQIILSK (65 aa)). Position 77 is a phosphotyrosine (Tyr-77). The interval 126–161 (NLEDSDASVERSQYPQSDDKLSPPKRDFPTAEEPHL) is disordered. The span at 142–160 (SDDKLSPPKRDFPTAEEPH) shows a compositional bias: basic and acidic residues. 2 consecutive PH domains span residues 482–574 (KKVK…NALK) and 587–679 (TPEK…QSIA). An Arf-GAP domain is found at 676-811 (QSIAETLSDY…TLLASLTKEE (136 aa)). The segment at 700–723 (CADCKAPDPDWASINLCVVICKKC) adopts a C4-type zinc-finger fold. PH domains follow at residues 878–1003 (DIHS…KHFV) and 1014–1114 (DYDL…AGTD). In terms of domain architecture, Rho-GAP spans 1116-1297 (NALQDQQLSK…DLINNYVEIF (182 aa)). One can recognise a Ras-associating domain in the interval 1326-1420 (GDLLIEVYVE…AYLVVKRFLT (95 aa)). Residues 1434 to 1537 (GSIKEGILKI…WMTSIFIAQH (104 aa)) enclose the PH 5 domain. Residue Ser-1632 is modified to Phosphoserine. Residues 1636-1675 (LEDTEPEAPLGQPKGHKGLKTLRKTEDRNSKATLDSDHKL) form a disordered region. Residues 1658 to 1675 (RKTEDRNSKATLDSDHKL) are compositionally biased toward basic and acidic residues.

In terms of tissue distribution, detected in brain, thymus, lymph node, thyroid, spinal cord, trachea, heart, skeletal muscle, spleen, kidney, liver, placenta, lung and peripheral blood leukocytes.

The protein localises to the cytoplasm. Functionally, phosphatidylinositol 3,4,5-trisphosphate-dependent GTPase-activating protein that modulates actin cytoskeleton remodeling by regulating ARF and RHO family members. Is activated by phosphatidylinositol 3,4,5-trisphosphate (PtdIns(3,4,5)P3) binding. Can be activated by phosphatidylinositol 3,4-bisphosphate (PtdIns(3,4,5)P2) binding, albeit with lower efficiency. The sequence is that of Arf-GAP with Rho-GAP domain, ANK repeat and PH domain-containing protein 2 (ARAP2) from Homo sapiens (Human).